A 472-amino-acid polypeptide reads, in one-letter code: Aspartyl/glutamyl-tRNA(Asn/Gln) amidotransferase subunit B (472 aa).

The protein belongs to the GatB/GatE family. GatB subfamily. As to quaternary structure, heterotrimer of A, B and C subunits.

The enzyme catalyses L-glutamyl-tRNA(Gln) + L-glutamine + ATP + H2O = L-glutaminyl-tRNA(Gln) + L-glutamate + ADP + phosphate + H(+). It catalyses the reaction L-aspartyl-tRNA(Asn) + L-glutamine + ATP + H2O = L-asparaginyl-tRNA(Asn) + L-glutamate + ADP + phosphate + 2 H(+). Allows the formation of correctly charged Asn-tRNA(Asn) or Gln-tRNA(Gln) through the transamidation of misacylated Asp-tRNA(Asn) or Glu-tRNA(Gln) in organisms which lack either or both of asparaginyl-tRNA or glutaminyl-tRNA synthetases. The reaction takes place in the presence of glutamine and ATP through an activated phospho-Asp-tRNA(Asn) or phospho-Glu-tRNA(Gln). The chain is Aspartyl/glutamyl-tRNA(Asn/Gln) amidotransferase subunit B from Campylobacter jejuni (strain RM1221).